The sequence spans 336 residues: Holliday junction branch migration complex subunit RuvB (336 aa).

Positions 4–184 are large ATPase domain (RuvB-L); it reads ADRLIQPQVI…FGIPLRLEFY (181 aa). ATP-binding positions include arginine 24, glycine 65, lysine 68, threonine 69, threonine 70, 131-133, arginine 174, tyrosine 184, and arginine 221; that span reads EDY. Position 69 (threonine 69) interacts with Mg(2+). The interval 185 to 255 is small ATPAse domain (RuvB-S); sequence NIKDLSTIVI…VAELALDMLD (71 aa). Residues 258-336 are head domain (RuvB-H); it reads AEGFDYMDRK…HFNLIQPEAK (79 aa). DNA-binding residues include arginine 294, arginine 313, and arginine 318.

Belongs to the RuvB family. As to quaternary structure, homohexamer. Forms an RuvA(8)-RuvB(12)-Holliday junction (HJ) complex. HJ DNA is sandwiched between 2 RuvA tetramers; dsDNA enters through RuvA and exits via RuvB. An RuvB hexamer assembles on each DNA strand where it exits the tetramer. Each RuvB hexamer is contacted by two RuvA subunits (via domain III) on 2 adjacent RuvB subunits; this complex drives branch migration. In the full resolvosome a probable DNA-RuvA(4)-RuvB(12)-RuvC(2) complex forms which resolves the HJ.

The protein resides in the cytoplasm. The catalysed reaction is ATP + H2O = ADP + phosphate + H(+). Functionally, the RuvA-RuvB-RuvC complex processes Holliday junction (HJ) DNA during genetic recombination and DNA repair, while the RuvA-RuvB complex plays an important role in the rescue of blocked DNA replication forks via replication fork reversal (RFR). RuvA specifically binds to HJ cruciform DNA, conferring on it an open structure. The RuvB hexamer acts as an ATP-dependent pump, pulling dsDNA into and through the RuvAB complex. RuvB forms 2 homohexamers on either side of HJ DNA bound by 1 or 2 RuvA tetramers; 4 subunits per hexamer contact DNA at a time. Coordinated motions by a converter formed by DNA-disengaged RuvB subunits stimulates ATP hydrolysis and nucleotide exchange. Immobilization of the converter enables RuvB to convert the ATP-contained energy into a lever motion, pulling 2 nucleotides of DNA out of the RuvA tetramer per ATP hydrolyzed, thus driving DNA branch migration. The RuvB motors rotate together with the DNA substrate, which together with the progressing nucleotide cycle form the mechanistic basis for DNA recombination by continuous HJ branch migration. Branch migration allows RuvC to scan DNA until it finds its consensus sequence, where it cleaves and resolves cruciform DNA. In Shewanella piezotolerans (strain WP3 / JCM 13877), this protein is Holliday junction branch migration complex subunit RuvB.